The primary structure comprises 118 residues: UPF0102 protein NE0719 (118 aa).

Belongs to the UPF0102 family.

The polypeptide is UPF0102 protein NE0719 (Nitrosomonas europaea (strain ATCC 19718 / CIP 103999 / KCTC 2705 / NBRC 14298)).